Consider the following 323-residue polypeptide: 4-hydroxy-3-methylbut-2-enyl diphosphate reductase (323 aa).

Cys-13 serves as a coordination point for [4Fe-4S] cluster. His-42 and His-75 together coordinate (2E)-4-hydroxy-3-methylbut-2-enyl diphosphate. His-42 and His-75 together coordinate dimethylallyl diphosphate. Isopentenyl diphosphate contacts are provided by His-42 and His-75. Cys-97 lines the [4Fe-4S] cluster pocket. A (2E)-4-hydroxy-3-methylbut-2-enyl diphosphate-binding site is contributed by His-125. His-125 is a binding site for dimethylallyl diphosphate. An isopentenyl diphosphate-binding site is contributed by His-125. Glu-127 (proton donor) is an active-site residue. A (2E)-4-hydroxy-3-methylbut-2-enyl diphosphate-binding site is contributed by Thr-168. Cys-198 contributes to the [4Fe-4S] cluster binding site. 4 residues coordinate (2E)-4-hydroxy-3-methylbut-2-enyl diphosphate: Ser-226, Ser-227, Asn-228, and Ser-270. Dimethylallyl diphosphate contacts are provided by Ser-226, Ser-227, Asn-228, and Ser-270. 4 residues coordinate isopentenyl diphosphate: Ser-226, Ser-227, Asn-228, and Ser-270.

It belongs to the IspH family. [4Fe-4S] cluster serves as cofactor.

It carries out the reaction isopentenyl diphosphate + 2 oxidized [2Fe-2S]-[ferredoxin] + H2O = (2E)-4-hydroxy-3-methylbut-2-enyl diphosphate + 2 reduced [2Fe-2S]-[ferredoxin] + 2 H(+). It catalyses the reaction dimethylallyl diphosphate + 2 oxidized [2Fe-2S]-[ferredoxin] + H2O = (2E)-4-hydroxy-3-methylbut-2-enyl diphosphate + 2 reduced [2Fe-2S]-[ferredoxin] + 2 H(+). It participates in isoprenoid biosynthesis; dimethylallyl diphosphate biosynthesis; dimethylallyl diphosphate from (2E)-4-hydroxy-3-methylbutenyl diphosphate: step 1/1. The protein operates within isoprenoid biosynthesis; isopentenyl diphosphate biosynthesis via DXP pathway; isopentenyl diphosphate from 1-deoxy-D-xylulose 5-phosphate: step 6/6. Functionally, catalyzes the conversion of 1-hydroxy-2-methyl-2-(E)-butenyl 4-diphosphate (HMBPP) into a mixture of isopentenyl diphosphate (IPP) and dimethylallyl diphosphate (DMAPP). Acts in the terminal step of the DOXP/MEP pathway for isoprenoid precursor biosynthesis. This Nitrosomonas europaea (strain ATCC 19718 / CIP 103999 / KCTC 2705 / NBRC 14298) protein is 4-hydroxy-3-methylbut-2-enyl diphosphate reductase.